The sequence spans 188 residues: Elongation factor P (188 aa).

Belongs to the elongation factor P family.

The protein resides in the cytoplasm. The protein operates within protein biosynthesis; polypeptide chain elongation. Functionally, involved in peptide bond synthesis. Stimulates efficient translation and peptide-bond synthesis on native or reconstituted 70S ribosomes in vitro. Probably functions indirectly by altering the affinity of the ribosome for aminoacyl-tRNA, thus increasing their reactivity as acceptors for peptidyl transferase. This is Elongation factor P from Rickettsia akari (strain Hartford).